The chain runs to 146 residues: 3-dehydroquinate dehydratase (146 aa).

The active-site Proton acceptor is the tyrosine 22. Substrate contacts are provided by asparagine 73, histidine 79, and aspartate 86. The Proton donor role is filled by histidine 99. Substrate is bound by residues 100–101 (VS) and arginine 110.

It belongs to the type-II 3-dehydroquinase family. Homododecamer.

The catalysed reaction is 3-dehydroquinate = 3-dehydroshikimate + H2O. The protein operates within metabolic intermediate biosynthesis; chorismate biosynthesis; chorismate from D-erythrose 4-phosphate and phosphoenolpyruvate: step 3/7. Functionally, catalyzes a trans-dehydration via an enolate intermediate. The sequence is that of 3-dehydroquinate dehydratase from Kineococcus radiotolerans (strain ATCC BAA-149 / DSM 14245 / SRS30216).